Reading from the N-terminus, the 514-residue chain is Probable E3 ubiquitin-protein ligase ARI10 (514 aa).

Positions 1–18 (MDYSDDDMIDNESGEENN) are enriched in acidic residues. Residues 1-26 (MDYSDDDMIDNESGEENNSDGGGNES) form a disordered region. Positions 117 to 322 (VDIQCGICFE…SDHYACNNYV (206 aa)) are TRIAD supradomain. Positions 121, 124, 138, 140, 143, 146, 166, 171, 210, 215, 231, 233, 238, 241, 246, 251, 278, and 281 each coordinate Zn(2+). The segment at 121-171 (CGICFESYTRKEIASVSCGHPYCKTCWTGYITTKIEDGPGCLRVKCPEPSC) adopts an RING-type 1 zinc-finger fold. The IBR-type zinc-finger motif lies at 190–251 (DKYYRYFLRS…SEDAHSPVDC (62 aa)). Residues 278–308 (CPKCKRPIEKSHGCNHMTCSASCGHRFCWIC) form an RING-type 2; atypical zinc finger. Cys291 is a catalytic residue. Zn(2+) is bound by residues Cys296, Cys300, Cys305, Cys308, His315, and Cys318.

Belongs to the RBR family. Ariadne subfamily. Zn(2+) is required as a cofactor.

It carries out the reaction [E2 ubiquitin-conjugating enzyme]-S-ubiquitinyl-L-cysteine + [acceptor protein]-L-lysine = [E2 ubiquitin-conjugating enzyme]-L-cysteine + [acceptor protein]-N(6)-ubiquitinyl-L-lysine.. It participates in protein modification; protein ubiquitination. Its function is as follows. Might act as an E3 ubiquitin-protein ligase, or as part of E3 complex, which accepts ubiquitin from specific E2 ubiquitin-conjugating enzymes and then transfers it to substrates. In Arabidopsis thaliana (Mouse-ear cress), this protein is Probable E3 ubiquitin-protein ligase ARI10 (ARI10).